The chain runs to 154 residues: Aspartate 1-decarboxylase 1 (154 aa).

Ser26 acts as the Schiff-base intermediate with substrate; via pyruvic acid in catalysis. Ser26 carries the post-translational modification Pyruvic acid (Ser). Thr58 provides a ligand contact to substrate. Tyr59 (proton donor) is an active-site residue. Substrate is bound at residue 74 to 76; the sequence is GAA. The segment at 129-154 is disordered; sequence VGLVRGDTNSPQPSLSEQAGDPRRAQ. The segment covering 135-145 has biased composition (polar residues); that stretch reads DTNSPQPSLSE.

It belongs to the PanD family. Heterooctamer of four alpha and four beta subunits. Pyruvate serves as cofactor. Post-translationally, is synthesized initially as an inactive proenzyme, which is activated by self-cleavage at a specific serine bond to produce a beta-subunit with a hydroxyl group at its C-terminus and an alpha-subunit with a pyruvoyl group at its N-terminus.

The protein resides in the cytoplasm. The catalysed reaction is L-aspartate + H(+) = beta-alanine + CO2. It participates in cofactor biosynthesis; (R)-pantothenate biosynthesis; beta-alanine from L-aspartate: step 1/1. Its function is as follows. Catalyzes the pyruvoyl-dependent decarboxylation of aspartate to produce beta-alanine. This chain is Aspartate 1-decarboxylase 1, found in Frankia casuarinae (strain DSM 45818 / CECT 9043 / HFP020203 / CcI3).